A 109-amino-acid polypeptide reads, in one-letter code: Small ribosomal subunit protein uS10 (109 aa).

The protein belongs to the universal ribosomal protein uS10 family. In terms of assembly, part of the 30S ribosomal subunit.

Functionally, involved in the binding of tRNA to the ribosomes. The chain is Small ribosomal subunit protein uS10 from Wolbachia pipientis wMel.